We begin with the raw amino-acid sequence, 316 residues long: Small ribosomal subunit biogenesis GTPase RsgA (316 aa).

The CP-type G domain maps to 83–248; it reads DQYKSKLFAA…LIDSPGFQEF (166 aa). Residues 131-134 and 185-193 each bind GTP; these read NKTD and GQSGMGKST. Residues cysteine 272, cysteine 277, histidine 279, and cysteine 285 each coordinate Zn(2+).

This sequence belongs to the TRAFAC class YlqF/YawG GTPase family. RsgA subfamily. As to quaternary structure, monomer. Associates with 30S ribosomal subunit, binds 16S rRNA. Requires Zn(2+) as cofactor.

Its subcellular location is the cytoplasm. Functionally, one of several proteins that assist in the late maturation steps of the functional core of the 30S ribosomal subunit. Helps release RbfA from mature subunits. May play a role in the assembly of ribosomal proteins into the subunit. Circularly permuted GTPase that catalyzes slow GTP hydrolysis, GTPase activity is stimulated by the 30S ribosomal subunit. This is Small ribosomal subunit biogenesis GTPase RsgA from Paraburkholderia xenovorans (strain LB400).